The primary structure comprises 840 residues: Translation initiation factor IF-2 (840 aa).

A compositionally biased stretch (basic and acidic residues) spans 95–143 (RSPDEIEAERQRELEEQRAAEEAERLKAEEAAARQRAEEEARKAEEAAR). Disordered stretches follow at residues 95-155 (RSPD…ATAG) and 172-256 (KPAA…PTGP). The span at 144-155 (AKAAQEAAATAG) shows a compositional bias: low complexity. 2 stretches are compositionally biased toward basic and acidic residues: residues 175 to 191 (AVEERKKEEPRRAPKRD) and 223 to 232 (STDEESDGYR). The span at 233-247 (RGGRGGKSKLKKRNQ) shows a compositional bias: basic residues. Residues 340 to 509 (TRAPVVTVMG…LLQAEVLELK (170 aa)) form the tr-type G domain. Residues 349–356 (GHVDHGKT) form a G1 region. GTP is bound at residue 349–356 (GHVDHGKT). Positions 374–378 (GITQH) are G2. The G3 stretch occupies residues 395–398 (DTPG). GTP contacts are provided by residues 395–399 (DTPGH) and 449–452 (NKID). Positions 449–452 (NKID) are G4. Positions 485–487 (SAK) are G5.

The protein belongs to the TRAFAC class translation factor GTPase superfamily. Classic translation factor GTPase family. IF-2 subfamily.

It localises to the cytoplasm. Functionally, one of the essential components for the initiation of protein synthesis. Protects formylmethionyl-tRNA from spontaneous hydrolysis and promotes its binding to the 30S ribosomal subunits. Also involved in the hydrolysis of GTP during the formation of the 70S ribosomal complex. The polypeptide is Translation initiation factor IF-2 (Pseudomonas aeruginosa (strain LESB58)).